Here is a 148-residue protein sequence, read N- to C-terminus: UPF0756 membrane protein YeaL (148 aa).

4 consecutive transmembrane segments (helical) span residues 14–34, 51–71, 86–106, and 121–141; these read ALGFISHNTTVAVSILVLIIV, LSIGIIILTIGIMAPIASGTL, LVAIAVGVIVSWLGGRGVTLM, and VLGVALFRGVPVGPLIAAGLV.

It belongs to the UPF0756 family.

The protein resides in the cell membrane. The protein is UPF0756 membrane protein YeaL of Escherichia coli O127:H6 (strain E2348/69 / EPEC).